Here is a 490-residue protein sequence, read N- to C-terminus: Serine hydroxymethyltransferase (490 aa).

Residues L179 and 183 to 185 (GHL) contribute to the (6S)-5,6,7,8-tetrahydrofolate site. An N6-(pyridoxal phosphate)lysine modification is found at K291. Residue K362 forms an Isoglutamyl lysine isopeptide (Lys-Gln) (interchain with Q-Cter in protein Pup) linkage.

The protein belongs to the SHMT family. As to quaternary structure, homodimer. Requires pyridoxal 5'-phosphate as cofactor.

It is found in the cytoplasm. The enzyme catalyses (6R)-5,10-methylene-5,6,7,8-tetrahydrofolate + glycine + H2O = (6S)-5,6,7,8-tetrahydrofolate + L-serine. It participates in one-carbon metabolism; tetrahydrofolate interconversion. The protein operates within amino-acid biosynthesis; glycine biosynthesis; glycine from L-serine: step 1/1. In terms of biological role, catalyzes the reversible interconversion of serine and glycine with tetrahydrofolate (THF) serving as the one-carbon carrier. This reaction serves as the major source of one-carbon groups required for the biosynthesis of purines, thymidylate, methionine, and other important biomolecules. Also exhibits THF-independent aldolase activity toward beta-hydroxyamino acids, producing glycine and aldehydes, via a retro-aldol mechanism. The sequence is that of Serine hydroxymethyltransferase from Mycolicibacterium smegmatis (strain ATCC 700084 / mc(2)155) (Mycobacterium smegmatis).